The chain runs to 267 residues: 7alpha-hydroxysteroid dehydrogenase (267 aa).

NADP(+) is bound by residues 13–18 (SATRGI), R38, 63–64 (DA), and N90. The cholate site is built by S145 and Y158. NADP(+)-binding positions include Y158, K162, and 191-195 (IATDA). Residue Y158 is the Proton acceptor of the active site.

The protein belongs to the short-chain dehydrogenases/reductases (SDR) family. In terms of assembly, homotetramer.

It carries out the reaction cholate + NADP(+) = 3alpha,12alpha-dihydroxy-7-oxo-5beta-cholanate + NADPH + H(+). The catalysed reaction is chenodeoxycholate + NADP(+) = 7-oxolithocholate + NADPH + H(+). 7alpha-hydroxysteroid dehydrogenase that catalyzes the NADP(+)-dependent oxidation of the 7alpha-hydroxy group of 7alpha-hydroxysteroids, such as the major human bile acids cholate and chenodeoxycholate, to the corresponding 7-oxosteroids. Is thus liley involved in the metabolism of primary bile acids. This Paraclostridium sordellii (Clostridium sordellii) protein is 7alpha-hydroxysteroid dehydrogenase.